An 85-amino-acid chain; its full sequence is RDS3 complex subunit 10 (85 aa).

In terms of assembly, belongs to the SF3b complex composed of CUS1, HSH49, HSH155, RCP1, RDS3 and RSE1.

Its subcellular location is the nucleus. In terms of biological role, involved in pre-mRNA splicing. Required for the SF3b integrity and prespliceosome assembly. The protein is RDS3 complex subunit 10 (YSF3) of Saccharomyces cerevisiae (strain ATCC 204508 / S288c) (Baker's yeast).